Consider the following 586-residue polypeptide: Mitogen-activated protein kinase 15 (586 aa).

The Protein kinase domain occupies 14 to 305 (YDIKKRLGKG…AEEALEHPYV (292 aa)). Residues 20–28 (LGKGAYGIV) and lysine 43 each bind ATP. Aspartate 138 functions as the Proton acceptor in the catalytic mechanism. 2 disordered regions span residues 354 to 506 (QKRE…DAPP) and 520 to 539 (NQRT…RFGR). Over residues 382–393 (PAPPAGTNPAPQ) the composition is skewed to pro residues. The span at 400-414 (PQRAAIAAPNQPPAQ) shows a compositional bias: low complexity. Positions 415–439 (KDSTQQSPKIKAPSSNPITHSTTHG) are enriched in polar residues. Over residues 452 to 463 (AGQQGAAGTTAQ) the composition is skewed to low complexity. Residues 464 to 473 (EVRKEVESRS) are compositionally biased toward basic and acidic residues. The segment covering 484 to 498 (FSHSQQARAAATNSA) has biased composition (polar residues).

In terms of assembly, interacts with dvl2.

Its subcellular location is the cytoplasm. It is found in the cytoskeleton. The protein resides in the cilium basal body. It localises to the cell projection. The protein localises to the cilium. Its subcellular location is the cell junction. It carries out the reaction L-seryl-[protein] + ATP = O-phospho-L-seryl-[protein] + ADP + H(+). The enzyme catalyses L-threonyl-[protein] + ATP = O-phospho-L-threonyl-[protein] + ADP + H(+). Its function is as follows. Atypical MAPK protein that regulates ciliogenesis by phosphorylating rcsd1 through its binding with dvl2. This is Mitogen-activated protein kinase 15 from Xenopus laevis (African clawed frog).